The sequence spans 160 residues: Small ribosomal subunit protein uS7 (160 aa).

Belongs to the universal ribosomal protein uS7 family. As to quaternary structure, part of the 30S ribosomal subunit. Contacts proteins S9 and S11.

Its function is as follows. One of the primary rRNA binding proteins, it binds directly to 16S rRNA where it nucleates assembly of the head domain of the 30S subunit. Is located at the subunit interface close to the decoding center, probably blocks exit of the E-site tRNA. This chain is Small ribosomal subunit protein uS7, found in Rickettsia prowazekii (strain Madrid E).